We begin with the raw amino-acid sequence, 208 residues long: Thymidylate kinase (208 aa).

Residue 7–14 (GIDGAGKT) participates in ATP binding.

It belongs to the thymidylate kinase family.

The catalysed reaction is dTMP + ATP = dTDP + ADP. Functionally, phosphorylation of dTMP to form dTDP in both de novo and salvage pathways of dTTP synthesis. This Xylella fastidiosa (strain 9a5c) protein is Thymidylate kinase (tmk).